A 979-amino-acid polypeptide reads, in one-letter code: UPF0182 protein Mb0065 (979 aa).

7 helical membrane passes run 19–41, 63–85, 114–136, 174–196, 208–230, 261–280, and 285–307; these read LVTAGMGMLALLLFGPRLVDIYV, LAIVAAVALVVAGIVLAALLLAY, LFGWGIAVTLGVVCGLIASFDWV, WLFVAVVLAFLASLLTHYLFGGL, AARVQLAVFAGAVVLLKAVAYWL, LVLVAIAVLCAVSFFTAIFL, and IPAMAAALLVLSAILVGGLWPLL. A disordered region spans residues 898 to 948; sequence GTGRVATAPGGDAASAPPPGAGGPAPPQAVPPPRTTQPPAAPPRGPDVPPA. Positions 902-912 are enriched in low complexity; the sequence is VATAPGGDAAS. The segment covering 913–946 has biased composition (pro residues); it reads APPPGAGGPAPPQAVPPPRTTQPPAAPPRGPDVP.

Belongs to the UPF0182 family.

The protein localises to the cell membrane. The protein is UPF0182 protein Mb0065 of Mycobacterium bovis (strain ATCC BAA-935 / AF2122/97).